Consider the following 263-residue polypeptide: Pyrrolysine synthase (263 aa).

L-pyrrolysine contacts are provided by L8, V57, I64, and A107. K155, V156, D175, C210, P228, I230, and E249 together coordinate NAD(+).

It belongs to the PylD family.

The catalysed reaction is (3R)-3-methyl-D-ornithyl-N(6)-L-lysine + NAD(+) = L-pyrrolysine + NH4(+) + NADH + 2 H(+). It functions in the pathway amino-acid biosynthesis; L-pyrrolysine biosynthesis. Functionally, catalyzes the ultimate step of the pyrrolysine biosynthesis pathway by converting the isopeptide (3R)-3-methyl-D-ornithyl-N(6)-L-lysine to the 22nd proteinogenic amino acid. Is able to use surrogate substrates such as (3R)-D-ornithyl-N(6)-L-lysine in vitro. The protein is Pyrrolysine synthase of Methanosarcina barkeri (strain Fusaro / DSM 804).